Here is a 578-residue protein sequence, read N- to C-terminus: ATP-dependent RNA helicase dbp3 (578 aa).

Over residues 59-69 (KRSADEEASVK) the composition is skewed to basic and acidic residues. Positions 59–117 (KRSADEEASVKRKEKKSKHEHKKHKKDKPSADKDRISKKDKKKSKKGKSKTKEESIEIN) are disordered. Basic residues predominate over residues 70-85 (RKEKKSKHEHKKHKKD). Residues 86–95 (KPSADKDRIS) are compositionally biased toward basic and acidic residues. The span at 96 to 107 (KKDKKKSKKGKS) shows a compositional bias: basic residues. The Q motif signature appears at 167-193 (LQFDELDVSAKLREGLKNYKEPTPIQA). One can recognise a Helicase ATP-binding domain in the interval 196–373 (WPYLLAGRDV…ATFLKDPVKI (178 aa)). 209–216 (AETGSGKT) is a binding site for ATP. The DEAD box motif lies at 316-319 (DEAD). Residues 402 to 550 (MLDNLLRKHL…DIPEGLFKFG (149 aa)) form the Helicase C-terminal domain.

Belongs to the DEAD box helicase family. DDX5/DBP2 subfamily.

The protein resides in the nucleus. It is found in the nucleolus. The enzyme catalyses ATP + H2O = ADP + phosphate + H(+). Functionally, ATP-dependent RNA helicase required for 60S ribosomal subunit synthesis. Involved in efficient pre-rRNA processing, predominantly at site A3, which is necessary for the normal formation of 25S and 5.8S rRNAs. The protein is ATP-dependent RNA helicase dbp3 (dbp3) of Schizosaccharomyces pombe (strain 972 / ATCC 24843) (Fission yeast).